The following is a 200-amino-acid chain: 3-isopropylmalate dehydratase small subunit (200 aa).

The protein belongs to the LeuD family. LeuD type 1 subfamily. In terms of assembly, heterodimer of LeuC and LeuD.

It catalyses the reaction (2R,3S)-3-isopropylmalate = (2S)-2-isopropylmalate. Its pathway is amino-acid biosynthesis; L-leucine biosynthesis; L-leucine from 3-methyl-2-oxobutanoate: step 2/4. Catalyzes the isomerization between 2-isopropylmalate and 3-isopropylmalate, via the formation of 2-isopropylmaleate. The sequence is that of 3-isopropylmalate dehydratase small subunit from Pectobacterium atrosepticum (strain SCRI 1043 / ATCC BAA-672) (Erwinia carotovora subsp. atroseptica).